Here is a 91-residue protein sequence, read N- to C-terminus: Small ribosomal subunit protein uS19 (91 aa).

Belongs to the universal ribosomal protein uS19 family.

In terms of biological role, protein S19 forms a complex with S13 that binds strongly to the 16S ribosomal RNA. In Cupriavidus pinatubonensis (strain JMP 134 / LMG 1197) (Cupriavidus necator (strain JMP 134)), this protein is Small ribosomal subunit protein uS19.